We begin with the raw amino-acid sequence, 380 residues long: 8-amino-7-oxononanoate synthase (380 aa).

Residue Arg-26 participates in substrate binding. 104–105 lines the pyridoxal 5'-phosphate pocket; sequence GY. Substrate is bound at residue His-129. Residues Ser-175, 200-203, and 232-235 contribute to the pyridoxal 5'-phosphate site; these read DEAH and TLSK. Lys-235 carries the post-translational modification N6-(pyridoxal phosphate)lysine. Residue Thr-345 participates in substrate binding.

It belongs to the class-II pyridoxal-phosphate-dependent aminotransferase family. BioF subfamily. In terms of assembly, homodimer. The cofactor is pyridoxal 5'-phosphate.

It catalyses the reaction 6-carboxyhexanoyl-[ACP] + L-alanine + H(+) = (8S)-8-amino-7-oxononanoate + holo-[ACP] + CO2. The protein operates within cofactor biosynthesis; biotin biosynthesis. In terms of biological role, catalyzes the decarboxylative condensation of pimeloyl-[acyl-carrier protein] and L-alanine to produce 8-amino-7-oxononanoate (AON), [acyl-carrier protein], and carbon dioxide. The sequence is that of 8-amino-7-oxononanoate synthase from Mycolicibacterium vanbaalenii (strain DSM 7251 / JCM 13017 / BCRC 16820 / KCTC 9966 / NRRL B-24157 / PYR-1) (Mycobacterium vanbaalenii).